We begin with the raw amino-acid sequence, 540 residues long: Cytokinin dehydrogenase 5 (540 aa).

Residues 1–22 form the signal peptide; the sequence is MNREMTSSFLLLTFAICKLIIA. An FAD-binding PCMH-type domain is found at 63–241; the sequence is SPEEPLAVLH…TRARISLEPA (179 aa). The FAD site is built by A97, G99, and G101. H102 is subject to Pros-8alpha-FAD histidine. Residues S103, Q107, D165, T170, S176, I180, and I231 each contribute to the FAD site. 2 N-linked (GlcNAc...) asparagine glycosylation sites follow: N310 and N406. The FAD site is built by Y479 and Q517.

This sequence belongs to the oxygen-dependent FAD-linked oxidoreductase family. Requires FAD as cofactor. In terms of tissue distribution, expressed in the developing leaf petioles and in the rib zone of the axillary shoot meristems. In roots, expressed in the vascular cylinder within the root apical meristem and only faintly detectable in the differentiated root.

It is found in the secreted. The protein resides in the extracellular space. The catalysed reaction is N(6)-dimethylallyladenine + A + H2O = 3-methyl-2-butenal + adenine + AH2. Catalyzes the oxidation of cytokinins, a family of N(6)-substituted adenine derivatives that are plant hormones, where the substituent is an isopentenyl group. In association with CKX3 regulates the activity of the reproductive meristems, flower organ size and ovule formation. The protein is Cytokinin dehydrogenase 5 (CKX5) of Arabidopsis thaliana (Mouse-ear cress).